A 224-amino-acid polypeptide reads, in one-letter code: ATP synthase subunit b (224 aa).

A helical membrane pass occupies residues 2–22; the sequence is TPSLGLIFWQSVIFLISFIIL.

It belongs to the ATPase B chain family. As to quaternary structure, F-type ATPases have 2 components, F(1) - the catalytic core - and F(0) - the membrane proton channel. F(1) has five subunits: alpha(3), beta(3), gamma(1), delta(1), epsilon(1). F(0) has three main subunits: a(1), b(2) and c(10-14). The alpha and beta chains form an alternating ring which encloses part of the gamma chain. F(1) is attached to F(0) by a central stalk formed by the gamma and epsilon chains, while a peripheral stalk is formed by the delta and b chains.

Its subcellular location is the cell membrane. Its function is as follows. F(1)F(0) ATP synthase produces ATP from ADP in the presence of a proton or sodium gradient. F-type ATPases consist of two structural domains, F(1) containing the extramembraneous catalytic core and F(0) containing the membrane proton channel, linked together by a central stalk and a peripheral stalk. During catalysis, ATP synthesis in the catalytic domain of F(1) is coupled via a rotary mechanism of the central stalk subunits to proton translocation. Component of the F(0) channel, it forms part of the peripheral stalk, linking F(1) to F(0). This is ATP synthase subunit b from Karelsulcia muelleri (strain GWSS) (Sulcia muelleri).